The chain runs to 187 residues: Cerebral dopamine neurotrophic factor (187 aa).

An N-terminal signal peptide occupies residues 1–24 (MRCTSPAALVTFCAGLWISNHVLA). 3 disulfides stabilise this stretch: C37/C124, C40/C113, and C71/C82.

It belongs to the ARMET family.

It localises to the secreted. Its function is as follows. Trophic factor for dopamine neurons. Prevents the 6-hydroxydopamine (6-OHDA)-induced degeneration of dopaminergic neurons. When administered after 6-OHDA-lesioning, restores the dopaminergic function and prevents the degeneration of dopaminergic neurons in substantia nigra. The chain is Cerebral dopamine neurotrophic factor (Cdnf) from Rattus norvegicus (Rat).